The following is a 62-amino-acid chain: MARKCVITGRKTKAGNNRSHAMNSTKRTWGANLQKVRILVDGKPKRVYVSARALKSGKVERV.

A disordered region spans residues 1–24 (MARKCVITGRKTKAGNNRSHAMNS). A compositionally biased stretch (polar residues) spans 14–24 (AGNNRSHAMNS).

Belongs to the bacterial ribosomal protein bL28 family.

The polypeptide is Large ribosomal subunit protein bL28 (Bacillus pumilus (strain SAFR-032)).